We begin with the raw amino-acid sequence, 447 residues long: Probable alpha-galactosidase B (447 aa).

The signal sequence occupies residues 1-22; it reads MTTFLSLTTAAAVLTLARGSNA. Intrachain disulfides connect Cys45-Cys77 and Cys127-Cys157. Asp155 acts as the Nucleophile in catalysis. N-linked (GlcNAc...) asparagine glycosylation is found at Asn162 and Asn180. 225-229 provides a ligand contact to substrate; that stretch reads NWGQA. Asn236 carries an N-linked (GlcNAc...) asparagine glycan. The Proton donor role is filled by Asp247. An N-linked (GlcNAc...) asparagine glycan is attached at Asn286.

It belongs to the glycosyl hydrolase 27 family.

It is found in the secreted. It catalyses the reaction Hydrolysis of terminal, non-reducing alpha-D-galactose residues in alpha-D-galactosides, including galactose oligosaccharides, galactomannans and galactolipids.. Hydrolyzes a variety of simple alpha-D-galactoside as well as more complex molecules such as oligosaccharides and polysaccharides. This chain is Probable alpha-galactosidase B (aglB), found in Neosartorya fischeri (strain ATCC 1020 / DSM 3700 / CBS 544.65 / FGSC A1164 / JCM 1740 / NRRL 181 / WB 181) (Aspergillus fischerianus).